Consider the following 226-residue polypeptide: Agamous-like MADS-box protein AP3 (226 aa).

Residues 1–61 (MARGKIEIKR…GKLHEYISPS (61 aa)) form the MADS-box domain. One can recognise a K-box domain in the interval 84-174 (YERMQENLKK…LHEFDARDRD (91 aa)).

Expressed during flower development in stamens and petals.

The protein localises to the nucleus. In terms of biological role, probable transcription factor involved in flower development. The chain is Agamous-like MADS-box protein AP3 from Vitis vinifera (Grape).